The chain runs to 485 residues: Cysteine--tRNA ligase (485 aa).

Position 28 (Cys28) interacts with Zn(2+). A 'HIGH' region motif is present at residues 30–40 (MTVYDLCHVGH). The Zn(2+) site is built by Cys209, His234, and Glu238. Residues 266-270 (KMSKS) carry the 'KMSKS' region motif. Lys269 provides a ligand contact to ATP.

The protein belongs to the class-I aminoacyl-tRNA synthetase family. In terms of assembly, monomer. Zn(2+) serves as cofactor.

The protein resides in the cytoplasm. It carries out the reaction tRNA(Cys) + L-cysteine + ATP = L-cysteinyl-tRNA(Cys) + AMP + diphosphate. This is Cysteine--tRNA ligase from Nitrosococcus oceani (strain ATCC 19707 / BCRC 17464 / JCM 30415 / NCIMB 11848 / C-107).